We begin with the raw amino-acid sequence, 373 residues long: 3 beta-hydroxysteroid dehydrogenase/Delta 5--&gt;4-isomerase (373 aa).

Residue Y155 is the Proton acceptor of the active site. Residue K159 coordinates NAD(+). The chain crosses the membrane as a helical span at residues 288-308 (IFLKYWLAFLLEIVSFLLSPI).

It belongs to the 3-beta-HSD family.

It localises to the endoplasmic reticulum membrane. Its subcellular location is the mitochondrion membrane. The enzyme catalyses a 3beta-hydroxy-Delta(5)-steroid + NAD(+) = a 3-oxo-Delta(5)-steroid + NADH + H(+). It catalyses the reaction a 3-oxo-Delta(5)-steroid = a 3-oxo-Delta(4)-steroid. Its pathway is lipid metabolism; steroid biosynthesis. 3-beta-HSD is a bifunctional enzyme, that catalyzes the oxidative conversion of Delta(5)-ene-3-beta-hydroxy steroid, and the oxidative conversion of ketosteroids. The 3-beta-HSD enzymatic system plays a crucial role in the biosynthesis of all classes of hormonal steroids. The chain is 3 beta-hydroxysteroid dehydrogenase/Delta 5--&gt;4-isomerase (HSD3B) from Equus caballus (Horse).